The following is a 761-amino-acid chain: Protein ACTIVITY OF BC1 COMPLEX KINASE 8, chloroplastic (761 aa).

Residues 1 to 57 (MATSSSSSSSLLLPNINFNSRQSPTITRSVSIAGIFLPRNRLSYNHNLRIRTRLIRA) constitute a chloroplast transit peptide. Positions 288–648 (RFDYEPIAAA…VKDLRKRWDR (361 aa)) constitute a Protein kinase domain. ATP contacts are provided by residues 294–302 (IAAASLGQV) and Lys315. Catalysis depends on Asp452, which acts as the Proton acceptor. The chain crosses the membrane as a helical span at residues 725–745 (PATIAYTVCAFFSLQVLIGII).

It belongs to the protein kinase superfamily. ADCK protein kinase family. As to expression, mostly expressed in leaves and flowers, and, to a lower extent, in stems, siliques and roots.

It localises to the plastid. Its subcellular location is the chloroplast envelope. It is found in the chloroplast membrane. It catalyses the reaction L-seryl-[protein] + ATP = O-phospho-L-seryl-[protein] + ADP + H(+). It carries out the reaction L-threonyl-[protein] + ATP = O-phospho-L-threonyl-[protein] + ADP + H(+). Its function is as follows. Involved in resistance to oxidative stress (e.g. hydrogen peroxide H(2)O(2)), high light and heavy metals (e.g. cadmium ions Cd(2+)). Influences responses to reactive oxygen species (ROS) production. Together with SIA1, regulates iron distribution within the chloroplast and mediates the oxidative stress response. Together with ABC1K7, influences chloroplast lipid synthesis/accumulation and modulates chloroplast membrane composition in response to stress. The protein is Protein ACTIVITY OF BC1 COMPLEX KINASE 8, chloroplastic of Arabidopsis thaliana (Mouse-ear cress).